Reading from the N-terminus, the 502-residue chain is Histidine--tRNA ligase (502 aa).

This sequence belongs to the class-II aminoacyl-tRNA synthetase family. Homodimer.

It localises to the cytoplasm. It catalyses the reaction tRNA(His) + L-histidine + ATP = L-histidyl-tRNA(His) + AMP + diphosphate + H(+). This Brucella ovis (strain ATCC 25840 / 63/290 / NCTC 10512) protein is Histidine--tRNA ligase.